We begin with the raw amino-acid sequence, 287 residues long: MNDPDNPDLSNDDSAWRELTLTAQDSDFFDRDTSNILSDFGWNLHHSSDHPHSLRFDSDLTQTTGVKPTTVTSSCSSSAAVSVAVTSTNNNPSATSSSSEDPAENSTASAEKTPPPETPVKEKKKAQKRIRQPRFAFMTKSDVDNLEDGYRWRKYGQKAVKNSPFPRSYYRCTNSRCTVKKRVERSSDDPSIVITTYEGQHCHQTIGFPRGGILTAHDPHSFTSHHHLPPPLPNPYYYQELLHQLHRDNNAPSPRLPRPTTEDTPAVSTPSEEGLLGDIVPQTMRNP.

Residues 86–99 show a composition bias toward low complexity; the sequence is TSTNNNPSATSSSS. The segment at 86 to 137 is disordered; it reads TSTNNNPSATSSSSEDPAENSTASAEKTPPPETPVKEKKKAQKRIRQPRFAF. Residues 122-132 are compositionally biased toward basic residues; the sequence is EKKKAQKRIRQ. Residues 141-206 constitute a DNA-binding region (WRKY); the sequence is SDVDNLEDGY…YEGQHCHQTI (66 aa). Positions 248-287 are disordered; sequence DNNAPSPRLPRPTTEDTPAVSTPSEEGLLGDIVPQTMRNP. Positions 262 to 271 are enriched in polar residues; sequence EDTPAVSTPS.

This sequence belongs to the WRKY group II-c family.

The protein localises to the nucleus. Functionally, transcription factor. Interacts specifically with the W box (5'-(T)TGAC[CT]-3'), a frequently occurring elicitor-responsive cis-acting element. The polypeptide is Probable WRKY transcription factor 57 (WRKY57) (Arabidopsis thaliana (Mouse-ear cress)).